The following is a 343-amino-acid chain: Phosphoglycerate mutase-like protein 2 (343 aa).

A chloroplast-targeting transit peptide spans 1–35 (MIHQSMTSNLSFYISSVSHLSSPLPSLSRLSLRCC). The active-site Tele-phosphohistidine intermediate is H65. The active-site Proton donor/acceptor is the E177. The tract at residues 322–343 (MTNYPGTILTGEDASSDIADQK) is disordered.

Belongs to the phosphoglycerate mutase family.

It is found in the plastid. Its subcellular location is the chloroplast. Functionally, may play a role in carbohydrates metabolism. The chain is Phosphoglycerate mutase-like protein 2 from Arabidopsis thaliana (Mouse-ear cress).